A 169-amino-acid polypeptide reads, in one-letter code: Allophycocyanin subunit beta-18 (169 aa).

Asn-72 bears the N4-methylasparagine mark. Position 82 (Cys-82) interacts with (2R,3E)-phycocyanobilin.

It belongs to the phycobiliprotein family. In terms of assembly, heterodimer of ApcE and this beta chain. Post-translationally, contains one covalently linked bilin chromophore. The chromophore is added by phycocyanobilin lyase CpcUS.

Its subcellular location is the cellular thylakoid membrane. Its function is as follows. A variant beta-allophycocyanin (AP) which forms a complex with ApcE, a phycobilisome terminal emitter that influences energy transfer to photosystem II. This is Allophycocyanin subunit beta-18 (apcF) from Picosynechococcus sp. (strain ATCC 27264 / PCC 7002 / PR-6) (Agmenellum quadruplicatum).